Here is a 327-residue protein sequence, read N- to C-terminus: Aspartate--ammonia ligase (327 aa).

Belongs to the class-II aminoacyl-tRNA synthetase family. AsnA subfamily.

The protein resides in the cytoplasm. It carries out the reaction L-aspartate + NH4(+) + ATP = L-asparagine + AMP + diphosphate + H(+). It functions in the pathway amino-acid biosynthesis; L-asparagine biosynthesis; L-asparagine from L-aspartate (ammonia route): step 1/1. The polypeptide is Aspartate--ammonia ligase (Bacillus mycoides (strain KBAB4) (Bacillus weihenstephanensis)).